The primary structure comprises 213 residues: MFATKDPEFENRINTNKSPRNAATCRGRYEKQAKGEFLMSDMLAVEQETNNDVRQFLNKINELRNKAPKNEETKHEEHTPDNHEETDHHEAKQQEQAWRGNLRYLDTLNRLDEVLPRKLYERWEKEHTVNDEAVLRALCYFAGTGKNSQLGWCRVGRGTIDKRARLSKNTVKKCLDRLVNHFKLVERTEGYIPGSAERECNEYQLLFKPYNMK.

Over residues 1–11 (MFATKDPEFEN) the composition is skewed to basic and acidic residues. 2 disordered regions span residues 1 to 21 (MFAT…SPRN) and 63 to 98 (LRNK…EQAW). The span at 12 to 21 (RINTNKSPRN) shows a compositional bias: polar residues. The span at 63 to 93 (LRNKAPKNEETKHEEHTPDNHEETDHHEAKQ) shows a compositional bias: basic and acidic residues.

This is an uncharacterized protein from Escherichia coli (strain K12).